A 221-amino-acid polypeptide reads, in one-letter code: Chalcone--flavanone isomerase (221 aa).

Substrate contacts are provided by T52, N117, and S193.

Belongs to the chalcone isomerase family. Flowers.

It catalyses the reaction a chalcone = a flavanone.. It functions in the pathway secondary metabolite biosynthesis; flavonoid biosynthesis. In terms of biological role, catalyzes the intramolecular cyclization of bicyclic chalcones into tricyclic (S)-flavanones. Responsible for the isomerization of 4,2',4',6'-tetrahydroxychalcone (also termed chalcone) into naringenin. The polypeptide is Chalcone--flavanone isomerase (CHI) (Gentiana triflora (Clustered gentian)).